The primary structure comprises 141 residues: Large ribosomal subunit protein uL14 (141 aa).

Belongs to the universal ribosomal protein uL14 family. As to quaternary structure, part of the 50S ribosomal subunit. Forms a cluster with proteins L3 and L24e, part of which may contact the 16S rRNA in 2 intersubunit bridges.

Functionally, binds to 23S rRNA. Forms part of two intersubunit bridges in the 70S ribosome. The protein is Large ribosomal subunit protein uL14 of Pyrococcus abyssi (strain GE5 / Orsay).